A 166-amino-acid polypeptide reads, in one-letter code: Glycine-rich RNA-binding protein GRP1A (166 aa).

Residues 8 to 86 enclose the RRM domain; sequence YRCFVGGLAW…RSITVNEAQS (79 aa). A disordered region spans residues 68-166; sequence GMNGQDLDGR…YGGSGGGGGW (99 aa). Gly residues-rich tracts occupy residues 88–146 and 153–166; these read GSGG…YGGG and EGGG…GGGW.

In terms of tissue distribution, predominantly expressed in meristematic and growing tissue.

It localises to the nucleus. In terms of biological role, may play a general role in circadian phenomena associated with meristematic tissue. This Sinapis alba (White mustard) protein is Glycine-rich RNA-binding protein GRP1A.